The primary structure comprises 505 residues: Zealexin A1 synthase (505 aa).

Residues 7 to 26 traverse the membrane as a helical segment; sequence IAVGTVAVVAVLSKLKSAVT. C442 serves as a coordination point for heme.

This sequence belongs to the cytochrome P450 family. Requires heme as cofactor.

The protein localises to the membrane. The catalysed reaction is (S)-beta-macrocarpene + 3 reduced [NADPH--hemoprotein reductase] + 3 O2 = zealexin A1 + 3 oxidized [NADPH--hemoprotein reductase] + 4 H2O + 4 H(+). In terms of biological role, involved in production of the antifungal phytoalexin zealexin A1. The enzyme sequentially oxidizes(S)-beta-macrocarpene via alcohol and aldehyde intermediates to form zealexin A1, a maize phytoalexin that provides biochemical protection against fungal infection. The polypeptide is Zealexin A1 synthase (Zea mays (Maize)).